An 89-amino-acid chain; its full sequence is MSASSRSQVLSLYKIMLRESQRFSSYNYRTYAIRRIRDAFREKKNVDDFLEIETLLHRAKENLNVIQRQVTIGQMYATHKLVIESAEHR.

Belongs to the complex I LYR family.

It is found in the mitochondrion. The protein resides in the nucleus. Its pathway is cofactor biosynthesis; iron-sulfur cluster biosynthesis. Its function is as follows. Required for nuclear and mitochondrial iron-sulfur protein biosynthesis. The protein is LYR motif-containing protein 4 (lyrm4) of Xenopus laevis (African clawed frog).